The primary structure comprises 148 residues: MVSALKCSLAVAVMISLACSAYAIKCYQCESLTMPKCGLKFEADETLLLDCSRIGPPRYLQNFFPLRNATGCMKKTLESVAGHPQIVRSCYFGDINNIQAGCQSDPSMPFVKQLGCDVCTKDECNGSSSLAPIAGAILLFFGVARLLA.

A signal peptide spans 1–23; sequence MVSALKCSLAVAVMISLACSAYA. Disulfide bonds link Cys26-Cys72, Cys29-Cys37, Cys51-Cys90, Cys102-Cys116, and Cys119-Cys124. A glycan (N-linked (GlcNAc...) asparagine) is linked at Asn68. Asn125 is a glycosylation site (N-linked (GlcNAc...) asparagine). Asn125 is lipidated: GPI-anchor amidated asparagine. A propeptide spans 126–148 (removed in mature form); sequence GSSSLAPIAGAILLFFGVARLLA. The helical transmembrane segment at 128–148 threads the bilayer; it reads SSLAPIAGAILLFFGVARLLA.

Belongs to the quiver family.

It is found in the cell membrane. The protein resides in the membrane. The protein localises to the perikaryon. It localises to the cell projection. Its subcellular location is the neuron projection. Functionally, necessary for the maintenance of persistent fluctuating activities and suppression of acute evoked activities in abdominal leucokinin-producing (ABLK) neurons to negatively regulate neuron excitability involved in nociceptive (perception of pain) behavioral responses. The polypeptide is UPAR/Ly6 domain-containing protein bero (Drosophila melanogaster (Fruit fly)).